The primary structure comprises 185 residues: Threonylcarbamoyl-AMP synthase (185 aa).

The region spanning 1-185 (MDNLQQVVSA…AFSDTVLRQG (185 aa)) is the YrdC-like domain.

The protein belongs to the SUA5 family. TsaC subfamily.

Its subcellular location is the cytoplasm. It carries out the reaction L-threonine + hydrogencarbonate + ATP = L-threonylcarbamoyladenylate + diphosphate + H2O. Its function is as follows. Required for the formation of a threonylcarbamoyl group on adenosine at position 37 (t(6)A37) in tRNAs that read codons beginning with adenine. Catalyzes the conversion of L-threonine, HCO(3)(-)/CO(2) and ATP to give threonylcarbamoyl-AMP (TC-AMP) as the acyladenylate intermediate, with the release of diphosphate. The chain is Threonylcarbamoyl-AMP synthase from Photobacterium profundum (strain SS9).